Consider the following 224-residue polypeptide: Vacuolar protein-sorting-associated protein 24 (224 aa).

Lys203 participates in a covalent cross-link: Glycyl lysine isopeptide (Lys-Gly) (interchain with G-Cter in ubiquitin).

The protein belongs to the SNF7 family. Core component of the ESCRT-III complex (endosomal sorting required for transport complex III). ESCRT-III appears to be sequentially assembled as a flat lattice on the endosome membrane and forms a transient 450 kDa complex that contains DID4, oligomerized SNF7, VPS20 and VPS24. SNF7 oligomerization into a membrane-associated filament is nucleated by association of SNF7 with VPS20; the process is terminated through association of VPS24, possibly by capping the SNF7 filament. VPS24 subsequently associates with DID4/VPS2. Interacts with the VPS4. Interacts with DID2.

Its subcellular location is the endosome membrane. It localises to the endomembrane system. Class E VPS protein implicated in concentration and sorting of cargo proteins of the multivesicular body (MVB) for incorporation into intralumenal vesicles. The lumenal sequestrated membrane proteins will be targeted into the vacuole after fusion of the endosome with the vacuole. Acts a component of the ESCRT-III complex, which appears to be critical for late steps in MVB sorting, such as membrane invagination and final cargo sorting and recruitment oflate-acting components of the sorting machinery. The MVB pathway requires the sequential function of ESCRT-O, -I,-II and -III complex assemblies. The DID4/VPS2-VPS24 subcomplex is required for the VPS4-dependent dissociation of ESCRT-III. The sequence is that of Vacuolar protein-sorting-associated protein 24 (VPS24) from Saccharomyces cerevisiae (strain ATCC 204508 / S288c) (Baker's yeast).